A 402-amino-acid polypeptide reads, in one-letter code: Multidrug resistance protein MdtH (402 aa).

11 helical membrane-spanning segments follow: residues 13–33 (YFLL…FPLI), 34–54 (SIRF…ALGL), 99–116 (PWVL…GTLF), 139–159 (LLMM…SWLL), 165–185 (LVCS…AWYL), 214–234 (VLTL…LPIM), 243–263 (AAVK…LYPI), 277–297 (LMAG…TSSL), 300–320 (LFTL…ARET), 340–360 (LGLA…FDAG), and 368–388 (LPWL…WWQF).

This sequence belongs to the major facilitator superfamily. DHA1 family. MdtH (TC 2.A.1.2.21) subfamily.

The protein resides in the cell inner membrane. The protein is Multidrug resistance protein MdtH of Klebsiella pneumoniae (strain 342).